The primary structure comprises 417 residues: Serine/threonine-protein kinase PkaB (417 aa).

The region spanning 9–270 (YTAHQILGRG…ELSARLRELL (262 aa)) is the Protein kinase domain. ATP contacts are provided by residues 15–23 (LGRGSAGTV) and Lys-36. Asp-130 serves as the catalytic Proton acceptor. Disordered stretches follow at residues 279-371 (LDVD…RAAT) and 395-417 (LATG…PAAP). A compositionally biased stretch (acidic residues) spans 280-293 (DVDEPDAEQPEDAP). Low complexity-rich tracts occupy residues 294 to 308 (DASA…STAE) and 349 to 368 (GTAR…ARNR). Positions 408-417 (DTRNSAPAAP) are enriched in polar residues.

This sequence belongs to the protein kinase superfamily. Ser/Thr protein kinase family. Post-translationally, autophosphorylated mainly at Thr.

The enzyme catalyses L-seryl-[protein] + ATP = O-phospho-L-seryl-[protein] + ADP + H(+). It carries out the reaction L-threonyl-[protein] + ATP = O-phospho-L-threonyl-[protein] + ADP + H(+). The polypeptide is Serine/threonine-protein kinase PkaB (pkaB) (Streptomyces coelicolor (strain ATCC BAA-471 / A3(2) / M145)).